The primary structure comprises 233 residues: Ribosomal RNA small subunit methyltransferase G (233 aa).

S-adenosyl-L-methionine is bound by residues Gly-91, Met-96, 142–143 (VE), and Arg-157.

This sequence belongs to the methyltransferase superfamily. RNA methyltransferase RsmG family.

The protein resides in the cytoplasm. The enzyme catalyses guanosine(527) in 16S rRNA + S-adenosyl-L-methionine = N(7)-methylguanosine(527) in 16S rRNA + S-adenosyl-L-homocysteine. Its function is as follows. Specifically methylates the N7 position of guanine in position 527 of 16S rRNA. The sequence is that of Ribosomal RNA small subunit methyltransferase G from Cupriavidus necator (strain ATCC 17699 / DSM 428 / KCTC 22496 / NCIMB 10442 / H16 / Stanier 337) (Ralstonia eutropha).